The sequence spans 193 residues: Holliday junction branch migration complex subunit RuvA (193 aa).

The segment at 1 to 64 (MIGRIAGTLI…EDAHLLYGFG (64 aa)) is domain I. The tract at residues 65–143 (TAAERETFRQ…ADLGTVPGGP (79 aa)) is domain II. A flexible linker region spans residues 144 to 151 (AVSDDAVD). The segment at 151–193 (DVLNALLALGYSDKEAALAIKQVPAGTGVSEGIKLALKALSKG) is domain III.

This sequence belongs to the RuvA family. As to quaternary structure, homotetramer. Forms an RuvA(8)-RuvB(12)-Holliday junction (HJ) complex. HJ DNA is sandwiched between 2 RuvA tetramers; dsDNA enters through RuvA and exits via RuvB. An RuvB hexamer assembles on each DNA strand where it exits the tetramer. Each RuvB hexamer is contacted by two RuvA subunits (via domain III) on 2 adjacent RuvB subunits; this complex drives branch migration. In the full resolvosome a probable DNA-RuvA(4)-RuvB(12)-RuvC(2) complex forms which resolves the HJ.

It localises to the cytoplasm. In terms of biological role, the RuvA-RuvB-RuvC complex processes Holliday junction (HJ) DNA during genetic recombination and DNA repair, while the RuvA-RuvB complex plays an important role in the rescue of blocked DNA replication forks via replication fork reversal (RFR). RuvA specifically binds to HJ cruciform DNA, conferring on it an open structure. The RuvB hexamer acts as an ATP-dependent pump, pulling dsDNA into and through the RuvAB complex. HJ branch migration allows RuvC to scan DNA until it finds its consensus sequence, where it cleaves and resolves the cruciform DNA. This chain is Holliday junction branch migration complex subunit RuvA, found in Ralstonia pickettii (strain 12J).